The sequence spans 388 residues: Lipid-A-disaccharide synthase (388 aa).

The protein belongs to the LpxB family.

The enzyme catalyses a lipid X + a UDP-2-N,3-O-bis[(3R)-3-hydroxyacyl]-alpha-D-glucosamine = a lipid A disaccharide + UDP + H(+). Its pathway is bacterial outer membrane biogenesis; LPS lipid A biosynthesis. Its function is as follows. Condensation of UDP-2,3-diacylglucosamine and 2,3-diacylglucosamine-1-phosphate to form lipid A disaccharide, a precursor of lipid A, a phosphorylated glycolipid that anchors the lipopolysaccharide to the outer membrane of the cell. The sequence is that of Lipid-A-disaccharide synthase from Sulfurihydrogenibium sp. (strain YO3AOP1).